A 178-amino-acid polypeptide reads, in one-letter code: Large ribosomal subunit protein uL5 (178 aa).

The protein belongs to the universal ribosomal protein uL5 family. Part of the 50S ribosomal subunit; part of the 5S rRNA/L5/L18/L25 subcomplex. Contacts the 5S rRNA and the P site tRNA. Forms a bridge to the 30S subunit in the 70S ribosome.

In terms of biological role, this is one of the proteins that bind and probably mediate the attachment of the 5S RNA into the large ribosomal subunit, where it forms part of the central protuberance. In the 70S ribosome it contacts protein S13 of the 30S subunit (bridge B1b), connecting the 2 subunits; this bridge is implicated in subunit movement. Contacts the P site tRNA; the 5S rRNA and some of its associated proteins might help stabilize positioning of ribosome-bound tRNAs. The polypeptide is Large ribosomal subunit protein uL5 (Acinetobacter baumannii (strain AB0057)).